A 240-amino-acid polypeptide reads, in one-letter code: Transcriptional regulatory protein rxt2 (240 aa).

It belongs to the RXT2 family. In terms of assembly, component of the RPD3C(L) complex.

Its subcellular location is the nucleus. Functionally, component of the RPD3C(L) histone deacetylase complex (HDAC) responsible for the deacetylation of lysine residues on the N-terminal part of the core histones (H2A, H2B, H3 and H4). Histone deacetylation gives a tag for epigenetic repression and plays an important role in transcriptional regulation, cell cycle progression and developmental events. The chain is Transcriptional regulatory protein rxt2 (rtx2) from Schizosaccharomyces pombe (strain 972 / ATCC 24843) (Fission yeast).